The chain runs to 176 residues: RNA pyrophosphohydrolase (176 aa).

In terms of domain architecture, Nudix hydrolase spans 8-159 (PYRTCVGMML…KRPVYERVVK (152 aa)). Residues 47–68 (GGVDPGEDTWAAAKRELYEETS) carry the Nudix box motif.

Belongs to the Nudix hydrolase family. RppH subfamily. The cofactor is a divalent metal cation.

Accelerates the degradation of transcripts by removing pyrophosphate from the 5'-end of triphosphorylated RNA, leading to a more labile monophosphorylated state that can stimulate subsequent ribonuclease cleavage. The sequence is that of RNA pyrophosphohydrolase from Rhodopseudomonas palustris (strain BisA53).